The following is a 172-amino-acid chain: Translation initiation factor IF-3 (172 aa).

This sequence belongs to the IF-3 family. Monomer.

The protein resides in the cytoplasm. In terms of biological role, IF-3 binds to the 30S ribosomal subunit and shifts the equilibrium between 70S ribosomes and their 50S and 30S subunits in favor of the free subunits, thus enhancing the availability of 30S subunits on which protein synthesis initiation begins. This Bartonella henselae (strain ATCC 49882 / DSM 28221 / CCUG 30454 / Houston 1) (Rochalimaea henselae) protein is Translation initiation factor IF-3.